The primary structure comprises 190 residues: Potassium-transporting ATPase KdpC subunit (190 aa).

The helical transmembrane segment at 10 to 30 threads the bilayer; it reads TFIFLLLITGGVYPLLTTVLG.

Belongs to the KdpC family. In terms of assembly, the system is composed of three essential subunits: KdpA, KdpB and KdpC.

It localises to the cell inner membrane. Its function is as follows. Part of the high-affinity ATP-driven potassium transport (or Kdp) system, which catalyzes the hydrolysis of ATP coupled with the electrogenic transport of potassium into the cytoplasm. This subunit acts as a catalytic chaperone that increases the ATP-binding affinity of the ATP-hydrolyzing subunit KdpB by the formation of a transient KdpB/KdpC/ATP ternary complex. This chain is Potassium-transporting ATPase KdpC subunit, found in Escherichia coli (strain 55989 / EAEC).